Consider the following 426-residue polypeptide: Serine hydroxymethyltransferase (426 aa).

Residues L115 and 119-121 (GHI) contribute to the (6S)-5,6,7,8-tetrahydrofolate site. The residue at position 225 (K225) is an N6-(pyridoxal phosphate)lysine.

Belongs to the SHMT family. In terms of assembly, homodimer. Requires pyridoxal 5'-phosphate as cofactor.

Its subcellular location is the cytoplasm. Its pathway is amino-acid biosynthesis; glycine biosynthesis; glycine from L-serine: step 1/1. In terms of biological role, catalyzes the reversible interconversion of serine and glycine with a modified folate serving as the one-carbon carrier. Also exhibits a pteridine-independent aldolase activity toward beta-hydroxyamino acids, producing glycine and aldehydes, via a retro-aldol mechanism. The polypeptide is Serine hydroxymethyltransferase (Thermoplasma volcanium (strain ATCC 51530 / DSM 4299 / JCM 9571 / NBRC 15438 / GSS1)).